The chain runs to 512 residues: GTPase Obg (512 aa).

The region spanning 2-159 is the Obg domain; the sequence is ATFVDTVTLH…GDVVLELKVV (158 aa). Residues 160–336 form the OBG-type G domain; sequence ADVALVGYPS…LSFALAELVE (177 aa). Residues 166 to 173, 191 to 195, 212 to 215, 288 to 291, and 317 to 319 contribute to the GTP site; these read GYPSAGKS, FTTLH, DVPG, NKID, and STV. Positions 173 and 193 each coordinate Mg(2+). Residues 355–439 form the OCT domain; it reads PRAVNEKPFT…GDGIVFDWEP (85 aa). The tract at residues 491–512 is disordered; sequence GEAGLWADEDGTDEDASSDAKA. Positions 497–512 are enriched in acidic residues; that stretch reads ADEDGTDEDASSDAKA.

This sequence belongs to the TRAFAC class OBG-HflX-like GTPase superfamily. OBG GTPase family. Monomer. Requires Mg(2+) as cofactor.

It is found in the cytoplasm. In terms of biological role, an essential GTPase which binds GTP, GDP and possibly (p)ppGpp with moderate affinity, with high nucleotide exchange rates and a fairly low GTP hydrolysis rate. Plays a role in control of the cell cycle, stress response, ribosome biogenesis and in those bacteria that undergo differentiation, in morphogenesis control. This is GTPase Obg from Clavibacter michiganensis subsp. michiganensis (strain NCPPB 382).